The sequence spans 558 residues: Potassium-transporting ATPase potassium-binding subunit (558 aa).

Helical transmembrane passes span 1–21 (MDTLAGILQVASVVLVLVLVH), 58–78 (WPAYLRAVLAFSLVGVLVVYG), 85–105 (FLPYALGLPAVPEGISFNTAV), 130–150 (GLAVQNFVSAAVGIAVAIALV), 179–199 (LSLVTAVVLIAGGVIQNFAGF), 245–265 (PTAWTSAFQVLLMLVIPFSLP), 279–299 (TAIAAVMATIAVASLTALTLF), 374–394 (GLYGMLVLAVIAVFVAGLLVG), 416–436 (ILVTPILVLVGTALSFAIPAV), 484–504 (ALGVAMLLGRFVPIVLVLALA), and 527–547 (FVGLLIGVTVIVTALTYFPVL).

Belongs to the KdpA family. The system is composed of three essential subunits: KdpA, KdpB and KdpC.

It is found in the cell membrane. Its function is as follows. Part of the high-affinity ATP-driven potassium transport (or Kdp) system, which catalyzes the hydrolysis of ATP coupled with the electrogenic transport of potassium into the cytoplasm. This subunit binds the extracellular potassium ions and delivers the ions to the membrane domain of KdpB through an intramembrane tunnel. This is Potassium-transporting ATPase potassium-binding subunit from Clavibacter sepedonicus (Clavibacter michiganensis subsp. sepedonicus).